The primary structure comprises 187 residues: Reactive Intermediate Deaminase A, chloroplastic (187 aa).

The transit peptide at 1–58 (MTWSVFRSINTPTLDLSTALRSTRTPLVAAGVGCATFAGVSLFRMSSRSPPFASLSVS) directs the protein to the chloroplast. R165 contacts substrate.

Belongs to the RutC family. As to expression, expressed in leaves, petiols, petals, carpels and shoot apex.

It localises to the plastid. The protein localises to the chloroplast. The catalysed reaction is 2-iminobutanoate + H2O = 2-oxobutanoate + NH4(+). It catalyses the reaction 2-iminopropanoate + H2O = pyruvate + NH4(+). It functions in the pathway amino-acid biosynthesis; L-isoleucine biosynthesis; 2-oxobutanoate from L-threonine. In terms of biological role, hydrolyzes the Ser-derived enamine/imine product of Thr dehydratase, protecting the plastidial branched-chain aminotransferase BCAT3 (AC Q9M401) from inactivation. Involved in Ile biosynthesis. This Arabidopsis thaliana (Mouse-ear cress) protein is Reactive Intermediate Deaminase A, chloroplastic.